A 158-amino-acid polypeptide reads, in one-letter code: Cell number regulator 11 (158 aa).

The next 2 helical transmembrane spans lie at 49 to 67 and 78 to 94; these read FGDLHTCCLTLWCPCVTFG and TCCMSGTLYYLLSTIGW.

The protein belongs to the cornifelin family.

The protein localises to the membrane. This Zea mays (Maize) protein is Cell number regulator 11 (CNR11).